The sequence spans 97 residues: Mapk-regulated corepressor-interacting protein 1 (97 aa).

Positions 1 to 30 are disordered; sequence MTSSPVSRVVYNGKRNSSHRSPPNSSEIFT. Phosphoserine is present on Ser21. At Thr30 the chain carries Phosphothreonine. Tyr41 bears the Phosphotyrosine mark. The disordered stretch occupies residues 77–97; the sequence is TFRPIDLSDLKRRNTQDAKKS. Positions 80–84 match the PXDLS motif motif; the sequence is PIDLS. Basic and acidic residues predominate over residues 82-97; it reads DLSDLKRRNTQDAKKS.

Belongs to the MCRIP family. Interacts (unphosphorylated form, via the PXDLS motif) with CTBP1, competitively inhibiting CTBP-ZEB1 interaction. Interacts with CTBP2. Interacts with MCRIP2. Interacts with DDX6. Phosphorylation by MAPK3/1 (ERK1/2) regulates MCRIP1 binding to CTBP(s).

The protein resides in the nucleus. The protein localises to the cytoplasm. It is found in the stress granule. Functionally, the phosphorylation status of MCRIP1 functions as a molecular switch to regulate epithelial-mesenchymal transition. Unphosphorylated MCRIP1 binds to and inhibits the transcriptional corepressor CTBP(s). When phosphorylated by MAPK/ERK, MCRIP1 releases CTBP(s) resulting in transcriptional silencing of the E-cadherin gene and induction of epithelial-mesenchymal transition. This is Mapk-regulated corepressor-interacting protein 1 (MCRIP1) from Bos taurus (Bovine).